A 430-amino-acid polypeptide reads, in one-letter code: 3-phosphoshikimate 1-carboxyvinyltransferase (430 aa).

Residues 1–20 (MHATVSPSRVRGRARAPPSK) form a disordered region. 3 residues coordinate 3-phosphoshikimate: Lys-20, Ser-21, and Arg-25. Lys-20 is a binding site for phosphoenolpyruvate. 2 residues coordinate phosphoenolpyruvate: Gly-91 and Arg-119. 6 residues coordinate 3-phosphoshikimate: Ser-164, Ser-165, Gln-166, Ser-192, Asp-312, and Lys-339. Gln-166 provides a ligand contact to phosphoenolpyruvate. The active-site Proton acceptor is Asp-312. 2 residues coordinate phosphoenolpyruvate: Arg-343 and Arg-386.

This sequence belongs to the EPSP synthase family. Monomer.

It is found in the cytoplasm. It catalyses the reaction 3-phosphoshikimate + phosphoenolpyruvate = 5-O-(1-carboxyvinyl)-3-phosphoshikimate + phosphate. Its pathway is metabolic intermediate biosynthesis; chorismate biosynthesis. In terms of biological role, catalyzes the transfer of the enolpyruvyl moiety of phosphoenolpyruvate (PEP) to the 5-hydroxyl of shikimate-3-phosphate (S3P) to produce enolpyruvyl shikimate-3-phosphate and inorganic phosphate. The chain is 3-phosphoshikimate 1-carboxyvinyltransferase from Halobacterium salinarum (strain ATCC 29341 / DSM 671 / R1).